The following is a 209-amino-acid chain: Large ribosomal subunit protein bL21m (209 aa).

The N-terminal 43 residues, 1 to 43 (MAAAIAASALPGAFGRLVSVCSRSILASQGSGSASLWSASRRF), are a transit peptide targeting the mitochondrion.

This sequence belongs to the bacterial ribosomal protein bL21 family. Component of the mitochondrial ribosome large subunit (39S) which comprises a 16S rRNA and about 50 distinct proteins.

It localises to the mitochondrion. This chain is Large ribosomal subunit protein bL21m (Mrpl21), found in Mus musculus (Mouse).